The primary structure comprises 591 residues: UvrABC system protein C (591 aa).

A GIY-YIG domain is found at 14 to 91; that stretch reads DQPGCYLMKD…IKKHDPKYNV (78 aa). The UVR domain occupies 196–231; sequence KEVKVELEKKMHKAAEELNFERAKELRDTLGYMEAV.

This sequence belongs to the UvrC family. In terms of assembly, interacts with UvrB in an incision complex.

It localises to the cytoplasm. Its function is as follows. The UvrABC repair system catalyzes the recognition and processing of DNA lesions. UvrC both incises the 5' and 3' sides of the lesion. The N-terminal half is responsible for the 3' incision and the C-terminal half is responsible for the 5' incision. In Halalkalibacterium halodurans (strain ATCC BAA-125 / DSM 18197 / FERM 7344 / JCM 9153 / C-125) (Bacillus halodurans), this protein is UvrABC system protein C.